Consider the following 430-residue polypeptide: Histidinol dehydrogenase (430 aa).

Positions 129, 190, and 213 each coordinate NAD(+). Substrate contacts are provided by Ser-236, Gln-258, and His-261. Residues Gln-258 and His-261 each coordinate Zn(2+). Catalysis depends on proton acceptor residues Glu-326 and His-327. Positions 327, 360, 414, and 419 each coordinate substrate. Asp-360 provides a ligand contact to Zn(2+). His-419 contributes to the Zn(2+) binding site.

Belongs to the histidinol dehydrogenase family. It depends on Zn(2+) as a cofactor.

It carries out the reaction L-histidinol + 2 NAD(+) + H2O = L-histidine + 2 NADH + 3 H(+). Its pathway is amino-acid biosynthesis; L-histidine biosynthesis; L-histidine from 5-phospho-alpha-D-ribose 1-diphosphate: step 9/9. Its function is as follows. Catalyzes the sequential NAD-dependent oxidations of L-histidinol to L-histidinaldehyde and then to L-histidine. The chain is Histidinol dehydrogenase from Gluconobacter oxydans (strain 621H) (Gluconobacter suboxydans).